Consider the following 422-residue polypeptide: Protein arginine methyltransferase NDUFAF7, mitochondrial (422 aa).

The N-terminal 28 residues, 1–28, are a transit peptide targeting the mitochondrion; the sequence is MRTLLRLKRLMPEVLWTKRSCSSSSINK.

It belongs to the NDUFAF7 family.

It is found in the mitochondrion. The enzyme catalyses L-arginyl-[protein] + 2 S-adenosyl-L-methionine = N(omega),N(omega)'-dimethyl-L-arginyl-[protein] + 2 S-adenosyl-L-homocysteine + 2 H(+). In terms of biological role, arginine methyltransferase involved in the assembly or stability of mitochondrial NADH:ubiquinone oxidoreductase complex (complex I). Acts by mediating symmetric dimethylation of 'Arg-118' of ndufs2 after it assembles into the complex I, stabilizing the early intermediate complex. The sequence is that of Protein arginine methyltransferase NDUFAF7, mitochondrial from Danio rerio (Zebrafish).